Here is a 319-residue protein sequence, read N- to C-terminus: NADH-quinone oxidoreductase subunit H 1 (319 aa).

9 consecutive transmembrane segments (helical) span residues 1–21 (MIGLIITAIISAVLIMALLVV), 77–97 (ILAPAIAATPVLAGFGVVAFG), 107–127 (VGVLFLLGMMGLTAYAAMLGA), 147–167 (LAYEVFLGLSLMGAVMLAGSL), 179–199 (VWFVVLQPLGAALFCIAGVAA), 214–234 (LVAGFITEYTGMSFGLFFLGE), 238–258 (VLLVSALAVTLFFGGWLGPWL), 262–282 (IWFGLKTAVIAVVFVWLRATL), and 293–313 (FAWKIALPLSLLNLLLTGIVV).

This sequence belongs to the complex I subunit 1 family. As to quaternary structure, NDH-1 is composed of 14 different subunits. Subunits NuoA, H, J, K, L, M, N constitute the membrane sector of the complex.

The protein localises to the cell inner membrane. It catalyses the reaction a quinone + NADH + 5 H(+)(in) = a quinol + NAD(+) + 4 H(+)(out). Functionally, NDH-1 shuttles electrons from NADH, via FMN and iron-sulfur (Fe-S) centers, to quinones in the respiratory chain. The immediate electron acceptor for the enzyme in this species is believed to be ubiquinone. Couples the redox reaction to proton translocation (for every two electrons transferred, four hydrogen ions are translocated across the cytoplasmic membrane), and thus conserves the redox energy in a proton gradient. This subunit may bind ubiquinone. In Rhodopseudomonas palustris (strain HaA2), this protein is NADH-quinone oxidoreductase subunit H 1.